The primary structure comprises 559 residues: 5'-AMP-activated protein kinase catalytic subunit alpha-1 (559 aa).

In terms of domain architecture, Protein kinase spans 27–279 (YILGDTLGVG…IKDIREHEWF (253 aa)). The residue at position 32 (Thr32) is a Phosphothreonine. ATP-binding positions include 33–41 (LGVGTFGKV) and Lys56. Catalysis depends on Asp150, which acts as the Proton acceptor. Phosphothreonine; by LKB1 and CaMKK2 is present on Thr183. Residues 302 to 381 (EALKEVCEKF…PERVPFLVAE (80 aa)) form an AIS region. Position 355 is a phosphothreonine (Thr355). Position 356 is a phosphoserine (Ser356). The residue at position 360 (Ser360) is a Phosphoserine; by ULK1. Thr368 is modified (phosphothreonine; by ULK1). Residue Thr382 is modified to Phosphothreonine. Ser397 is subject to Phosphoserine; by ULK1. 2 positions are modified to phosphoserine: Ser467 and Ser486. A compositionally biased stretch (polar residues) spans 485–505 (KSGTATPQRSGSISNYRSCQR). The interval 485 to 536 (KSGTATPQRSGSISNYRSCQRSDSDAEAQGKPSDVSLTSSVTSLDSSPVDVA) is disordered. Thr488 carries the phosphothreonine; by ULK1 modification. Thr490 bears the Phosphothreonine mark. Ser496, Ser508, Ser524, and Ser527 each carry phosphoserine. The segment covering 516-535 (PSDVSLTSSVTSLDSSPVDV) has biased composition (low complexity).

Belongs to the protein kinase superfamily. CAMK Ser/Thr protein kinase family. SNF1 subfamily. In terms of assembly, AMPK is a heterotrimer of an alpha catalytic subunit (PRKAA1 or PRKAA2), a beta (PRKAB1 or PRKAB2) and a gamma non-catalytic subunits (PRKAG1, PRKAG2 or PRKAG3). Interacts with FNIP1 and FNIP2. The cofactor is Mg(2+). Phosphorylated at Thr-183 by STK11/LKB1 in complex with STE20-related adapter-alpha (STRADA) pseudo kinase and CAB39. Also phosphorylated at Thr-183 by CAMKK2; triggered by a rise in intracellular calcium ions, without detectable changes in the AMP/ATP ratio. CAMKK1 can also phosphorylate Thr-183, but at a much lower level. Dephosphorylated by protein phosphatase 2A and 2C (PP2A and PP2C). Phosphorylated by ULK1 and ULK2; leading to negatively regulate AMPK activity and suggesting the existence of a regulatory feedback loop between ULK1, ULK2 and AMPK. Dephosphorylated by PPM1A and PPM1B. In terms of processing, ubiquitinated. Post-translationally, glycosylated; O-GlcNAcylated by OGT, promoting the AMP-activated protein kinase (AMPK) activity.

It localises to the cytoplasm. Its subcellular location is the nucleus. It catalyses the reaction L-seryl-[protein] + ATP = O-phospho-L-seryl-[protein] + ADP + H(+). It carries out the reaction L-threonyl-[protein] + ATP = O-phospho-L-threonyl-[protein] + ADP + H(+). The enzyme catalyses L-seryl-[acetyl-CoA carboxylase] + ATP = O-phospho-L-seryl-[acetyl-CoA carboxylase] + ADP + H(+). The catalysed reaction is L-seryl-[3-hydroxy-3-methylglutaryl-coenzyme A reductase] + ATP = O-phospho-L-seryl-[3-hydroxy-3-methylglutaryl-coenzyme A reductase] + ADP + H(+). It catalyses the reaction L-seryl-[tau protein] + ATP = O-phospho-L-seryl-[tau protein] + ADP + H(+). It carries out the reaction L-threonyl-[tau protein] + ATP = O-phospho-L-threonyl-[tau protein] + ADP + H(+). Activated by phosphorylation on Thr-183. Binding of AMP to non-catalytic gamma subunit (PRKAG1, PRKAG2 or PRKAG3) results in allosteric activation, inducing phosphorylation on Thr-183. AMP-binding to gamma subunit also sustains activity by preventing dephosphorylation of Thr-183. ADP also stimulates Thr-183 phosphorylation, without stimulating already phosphorylated AMPK. ATP promotes dephosphorylation of Thr-183, rendering the enzyme inactive. Under physiological conditions AMPK mainly exists in its inactive form in complex with ATP, which is much more abundant than AMP. Selectively inhibited by compound C (6-[4-(2-Piperidin-1-yl-ethoxy)-phenyl)]-3-pyridin-4-yl-pyyrazolo[1,5-a] pyrimidine. Activated by resveratrol, a natural polyphenol present in red wine, and S17834, a synthetic polyphenol. Functionally, catalytic subunit of AMP-activated protein kinase (AMPK), an energy sensor protein kinase that plays a key role in regulating cellular energy metabolism. In response to reduction of intracellular ATP levels, AMPK activates energy-producing pathways and inhibits energy-consuming processes: inhibits protein, carbohydrate and lipid biosynthesis, as well as cell growth and proliferation. AMPK acts via direct phosphorylation of metabolic enzymes, and by longer-term effects via phosphorylation of transcription regulators. Regulates lipid synthesis by phosphorylating and inactivating lipid metabolic enzymes such as ACACA, ACACB, GYS1, HMGCR and LIPE; regulates fatty acid and cholesterol synthesis by phosphorylating acetyl-CoA carboxylase (ACACA and ACACB) and hormone-sensitive lipase (LIPE) enzymes, respectively. Promotes lipolysis of lipid droplets by mediating phosphorylation of isoform 1 of CHKA (CHKalpha2). Regulates insulin-signaling and glycolysis by phosphorylating IRS1, PFKFB2 and PFKFB3. AMPK stimulates glucose uptake in muscle by increasing the translocation of the glucose transporter SLC2A4/GLUT4 to the plasma membrane, possibly by mediating phosphorylation of TBC1D4/AS160. Regulates transcription and chromatin structure by phosphorylating transcription regulators involved in energy metabolism such as CRTC2/TORC2, FOXO3, histone H2B, HDAC5, MEF2C, MLXIPL/ChREBP, EP300, HNF4A, p53/TP53, SREBF1, SREBF2 and PPARGC1A. Acts as a key regulator of glucose homeostasis in liver by phosphorylating CRTC2/TORC2, leading to CRTC2/TORC2 sequestration in the cytoplasm. In response to stress, phosphorylates 'Ser-36' of histone H2B (H2BS36ph), leading to promote transcription. Acts as a key regulator of cell growth and proliferation by phosphorylating FNIP1, TSC2, RPTOR, WDR24 and ATG1/ULK1: in response to nutrient limitation, negatively regulates the mTORC1 complex by phosphorylating RPTOR component of the mTORC1 complex and by phosphorylating and activating TSC2. Also phosphorylates and inhibits GATOR2 subunit WDR24 in response to nutrient limitation, leading to suppress glucose-mediated mTORC1 activation. In response to energetic stress, phosphorylates FNIP1, inactivating the non-canonical mTORC1 signaling, thereby promoting nuclear translocation of TFEB and TFE3, and inducing transcription of lysosomal or autophagy genes. In response to nutrient limitation, promotes autophagy by phosphorylating and activating ATG1/ULK1. In that process, it also activates WDR45/WIPI4. Phosphorylates CASP6, thereby preventing its autoprocessing and subsequent activation. In response to nutrient limitation, phosphorylates transcription factor FOXO3 promoting FOXO3 mitochondrial import. Also acts as a regulator of cellular polarity by remodeling the actin cytoskeleton; probably by indirectly activating myosin. AMPK also acts as a regulator of circadian rhythm by mediating phosphorylation of CRY1, leading to destabilize it. May regulate the Wnt signaling pathway by phosphorylating CTNNB1, leading to stabilize it. Also has tau-protein kinase activity: in response to amyloid beta A4 protein (APP) exposure, activated by CAMKK2, leading to phosphorylation of MAPT/TAU; however the relevance of such data remains unclear in vivo. Also phosphorylates CFTR, EEF2K, KLC1, NOS3 and SLC12A1. Regulates hepatic lipogenesis. Activated via SIRT3, represses sterol regulatory element-binding protein (SREBP) transcriptional activities and ATP-consuming lipogenesis to restore cellular energy balance. Upon stress, regulates mitochondrial fragmentation through phosphorylation of MTFR1L. The protein is 5'-AMP-activated protein kinase catalytic subunit alpha-1 (Prkaa1) of Mus musculus (Mouse).